The following is a 269-amino-acid chain: Mitochondrial acidic protein mam33 (269 aa).

The protein belongs to the MAM33 family.

The protein localises to the cytoplasm. Its subcellular location is the mitochondrion matrix. In Schizosaccharomyces pombe (strain 972 / ATCC 24843) (Fission yeast), this protein is Mitochondrial acidic protein mam33.